The sequence spans 50 residues: Thrombin-like enzyme BpirSP27 (50 aa).

The region spanning 1–50 (VVGGDECNINEHRSLVAIFNSTGFFCSGILLNQEWVLTASHCDSTNFQMK) is the Peptidase S1 domain. Asparagine 20 carries an N-linked (GlcNAc...) asparagine glycan. Residues cysteine 26 and cysteine 42 are joined by a disulfide bond. The Charge relay system role is filled by histidine 41.

It belongs to the peptidase S1 family. Snake venom subfamily. In terms of assembly, monomer. In terms of processing, N-glycosylated. As to expression, expressed by the venom gland.

It localises to the secreted. With respect to regulation, inhibited by serine protease inhibitors PMSF, benzamidine, leupeptin and aprotinin, as well as by copper (Cu2+) and manganese (Mn2+) ions. Not inhibited by metalloprotease inhibitors EDTA, EGTA and 1,10-phenanthroline, as well as by barium (Ba2+) and calcium ion (Ca2+). Snake venom serine protease that interferes with the hemostatic system of the prey. It preferentially degrades the Bbeta chain (FGB) of fibrinogen, with minor effects on the Aalpha chain (FGA). It presents a lower ability to degrade fibrin clots than BpirSP41. It hydrolyzes chromogenic substrates S-2238 (used for testing thrombin activity), S-2222 (factor Xa), S-2266 (glandular kallikrein and factor XIa), S-2302 (plasma kallikrein, factor XIa and XIIa), and S-2251 (plasmin). It shows a decrease in the clotting time of human plasma in the presence of increasing doses of the enzyme. Its minimum coagulant dose (MCD) is 3.5 ug. It also promotes platelet aggregation in a concentration-dependent manner in the presence or absence of calcium. It also shows 20% inhibition of the hemolytic activity promoted by the complement pathways and possess only a minor role in the induction of edema and pain in rat. This chain is Thrombin-like enzyme BpirSP27, found in Bothrops pirajai (Piraja's lancehead).